The chain runs to 88 residues: Sigma-conotoxin GVIIIA (88 aa).

The signal sequence occupies residues 1–20; that stretch reads MMSKMGAMFVLLLLFTLASS. A propeptide spanning residues 21–46 is cleaved from the precursor; it reads LQEGDVQARKTRLKSDFYRALARDDR. Pro55 is subject to 4-hydroxyproline. Trp80 bears the 6'-bromotryptophan mark. Ser87 carries the post-translational modification Serine amide.

Belongs to the conotoxin S superfamily. In terms of processing, contains 5 disulfide bonds. In terms of tissue distribution, expressed by the venom duct.

Its subcellular location is the secreted. In terms of biological role, sigma-conotoxins bind and inhibit serotonin-gated ion channels. This peptide selectively and reversibly inhibits 5-hydroxytryptamine 3 receptor (HTR3A) through competitive antagonism (IC(50)=53-86.8 nM). The polypeptide is Sigma-conotoxin GVIIIA (Conus geographus (Geography cone)).